The primary structure comprises 156 residues: MRKSIIGIIVLHVVMALDQISKLYMSKLYAAHGDITVFEYCNLIQLWNKGISFGLFSTLENGNTVFMVLSAVIIAILSYTKIKTKSMSRSCCLSVIVGGALGNLMDRLRFGAVYDFIDLHIGDWHWPAFNLADLTITCGVIVFLAMELRKRSQLNA.

The chain crosses the membrane as a helical span at residues 62–82 (GNTVFMVLSAVIIAILSYTKI). Active-site residues include Asp-115 and Asp-133. The helical transmembrane segment at 126 to 146 (WPAFNLADLTITCGVIVFLAM) threads the bilayer.

This sequence belongs to the peptidase A8 family.

Its subcellular location is the cell inner membrane. It carries out the reaction Release of signal peptides from bacterial membrane prolipoproteins. Hydrolyzes -Xaa-Yaa-Zaa-|-(S,diacylglyceryl)Cys-, in which Xaa is hydrophobic (preferably Leu), and Yaa (Ala or Ser) and Zaa (Gly or Ala) have small, neutral side chains.. The protein operates within protein modification; lipoprotein biosynthesis (signal peptide cleavage). Functionally, this protein specifically catalyzes the removal of signal peptides from prolipoproteins. The sequence is that of Lipoprotein signal peptidase from Anaplasma phagocytophilum (strain HZ).